Reading from the N-terminus, the 448-residue chain is Fibulin-5 (448 aa).

The signal sequence occupies residues 1–23; the sequence is MPGIKRILTVTILALCLPSPGNA. Residues 42–82 enclose the EGF-like 1; calcium-binding domain; that stretch reads DIDECRTIPEACRGDMMCVNQNGGYLCIPRTNPVYRGPYSN. 17 cysteine pairs are disulfide-bonded: C46-C59, C53-C68, C131-C144, C138-C153, C155-C166, C172-C181, C177-C190, C192-C205, C211-C221, C217-C230, C232-C245, C251-C262, C258-C271, C273-C286, C292-C305, C299-C314, and C320-C332. The Cell attachment site motif lies at 54 to 56; that stretch reads RGD. Residues 127–167 enclose the EGF-like 2; calcium-binding domain; it reads DVDECATDSHQCNPTQICINTEGGYTCSCTDGYWLLEGQCL. In terms of domain architecture, EGF-like 3; calcium-binding spans 168 to 206; that stretch reads DIDECRYGYCQQLCANVPGSYSCTCNPGFTLNEDGRSCQ. An EGF-like 4; calcium-binding domain is found at 207 to 246; the sequence is DVNECATENPCVQTCVNTYGSFICRCDPGYELEEDGVHCS. Residues 245–448 are interaction with LOXL1; that stretch reads CSDMDECSFS…LRIYVSQYPF (204 aa). Residues 247–287 form the EGF-like 5; calcium-binding domain; the sequence is DMDECSFSEFLCQHECVNQPGTYFCSCPPGYILLDDNRSCQ. N283 and N296 each carry an N-linked (GlcNAc...) asparagine glycan. One can recognise an EGF-like 6; calcium-binding domain in the interval 288–333; that stretch reads DINECEHRNHTCNLQQTCYNLQGGFKCIDPIRCEEPYLRISDNRCM.

Belongs to the fibulin family. As to quaternary structure, homodimer. Monomer, homodimerizes in presence of Ca(2+). Interacts with ELN. Interacts (via N-terminus) with the integrins ITGAV/ITGB3, ITGAV/ITGB5 and ITGA9/ITGB1. Interacts with FBN1 (via N-terminal domain). Forms a ternary complex with ELN and FBN1. Interacts with EFEMP2 with moderate affinity. Interacts with LOXL1. In terms of processing, N-glycosylated. In terms of tissue distribution, expressed in skin fibroblasts (at protein level). Expressed predominantly in heart, ovary, and colon but also in kidney, pancreas, testis, lung and placenta. Not detectable in brain, liver, thymus, prostate, or peripheral blood leukocytes.

The protein resides in the secreted. The protein localises to the extracellular space. It localises to the extracellular matrix. In terms of biological role, essential for elastic fiber formation, is involved in the assembly of continuous elastin (ELN) polymer and promotes the interaction of microfibrils and ELN. Stabilizes and organizes elastic fibers in the skin, lung and vasculature. Promotes adhesion of endothelial cells through interaction of integrins and the RGD motif. Vascular ligand for integrin receptors which may play a role in vascular development and remodeling. May act as an adapter that mediates the interaction between FBN1 and ELN. The sequence is that of Fibulin-5 (FBLN5) from Homo sapiens (Human).